The primary structure comprises 317 residues: Putative methyltransferase YMR310C (317 aa).

The residue at position 190 (S190) is a Phosphoserine.

Belongs to the class IV-like SAM-binding methyltransferase superfamily.

The protein resides in the nucleus. The sequence is that of Putative methyltransferase YMR310C from Saccharomyces cerevisiae (strain ATCC 204508 / S288c) (Baker's yeast).